The primary structure comprises 859 residues: Leucine--tRNA ligase (859 aa).

The 'HIGH' region motif lies at 42–52; that stretch reads PYPSGRLHMGH. The 'KMSKS' region motif lies at 618–622; that stretch reads KMSKS. An ATP-binding site is contributed by Lys-621.

It belongs to the class-I aminoacyl-tRNA synthetase family.

The protein resides in the cytoplasm. The enzyme catalyses tRNA(Leu) + L-leucine + ATP = L-leucyl-tRNA(Leu) + AMP + diphosphate. This is Leucine--tRNA ligase from Shewanella baltica (strain OS185).